The following is a 288-amino-acid chain: Protease HtpX (288 aa).

The next 2 membrane-spanning stretches (helical) occupy residues 4-24 (VMLF…VLNI) and 36-56 (LSGL…ISLM). Residue His-143 coordinates Zn(2+). Residue Glu-144 is part of the active site. A Zn(2+)-binding site is contributed by His-147. Transmembrane regions (helical) follow at residues 151 to 171 (GDMV…IFLS) and 193 to 213 (MVYF…ASFI). Glu-222 contributes to the Zn(2+) binding site.

Belongs to the peptidase M48B family. Zn(2+) is required as a cofactor.

The protein resides in the cell inner membrane. This is Protease HtpX from Vibrio vulnificus (strain YJ016).